Consider the following 253-residue polypeptide: Imidazole glycerol phosphate synthase subunit HisF (253 aa).

Residues Asp-11 and Asp-130 contribute to the active site.

Belongs to the HisA/HisF family. In terms of assembly, heterodimer of HisH and HisF.

It is found in the cytoplasm. The catalysed reaction is 5-[(5-phospho-1-deoxy-D-ribulos-1-ylimino)methylamino]-1-(5-phospho-beta-D-ribosyl)imidazole-4-carboxamide + L-glutamine = D-erythro-1-(imidazol-4-yl)glycerol 3-phosphate + 5-amino-1-(5-phospho-beta-D-ribosyl)imidazole-4-carboxamide + L-glutamate + H(+). Its pathway is amino-acid biosynthesis; L-histidine biosynthesis; L-histidine from 5-phospho-alpha-D-ribose 1-diphosphate: step 5/9. IGPS catalyzes the conversion of PRFAR and glutamine to IGP, AICAR and glutamate. The HisF subunit catalyzes the cyclization activity that produces IGP and AICAR from PRFAR using the ammonia provided by the HisH subunit. This is Imidazole glycerol phosphate synthase subunit HisF from Cereibacter sphaeroides (strain KD131 / KCTC 12085) (Rhodobacter sphaeroides).